Here is a 445-residue protein sequence, read N- to C-terminus: Secretin receptor (445 aa).

The signal sequence occupies residues 1–21 (MCPRPGPPLGLWLLLGFACAA). At 22–137 (HLVGAPPRLC…HERQHAYLLK (116 aa)) the chain is on the extracellular side. Disulfide bonds link C44–C71, C62–C103, and C85–C119. 4 N-linked (GlcNAc...) asparagine glycosylation sites follow: N68, N96, N102, and N124. A helical transmembrane segment spans residues 138–163 (LKVMYTVGYSSSLVMLLVALGILCAF). The Cytoplasmic portion of the chain corresponds to 164 to 170 (RRLHCTR). A helical transmembrane segment spans residues 171-191 (NYIHMHLFLSFILRALSNFIK). Over 192 to 212 (DAVLFSSDDAIHCDAHRVGCK) the chain is Extracellular. Residues C211 and C281 are joined by a disulfide bond. Residues 213–235 (LVMVFFQYCIMANYAWLLVEGLY) traverse the membrane as a helical segment. The Cytoplasmic portion of the chain corresponds to 236 to 250 (LHSLLVVSFFSERKC). A helical membrane pass occupies residues 251 to 272 (LQGFVVLGWGSPAMFVTSWAVT). The Extracellular segment spans residues 273–287 (RHFLEDSGCWDINAN). The helical transmembrane segment at 288-311 (AAIWWVIRGPVILSILINFILFIN) threads the bilayer. The Cytoplasmic segment spans residues 312 to 336 (ILRILTRKLRTQETRGQDMNHYKRL). The helical transmembrane segment at 337 to 352 (ARSTLLLIPLFGVHYI) threads the bilayer. Residues 353–363 (VFVFSPEGAME) are Extracellular-facing. A helical membrane pass occupies residues 364-387 (IQLFFELALGSFQGLVVAVLYCFL). At 388-445 (NGEVQLEVQKKWQQWHLWEPPLCPVALSSSFSNGTSSLNSTKACPSGRSRDTCKVSII) the chain is on the cytoplasmic side.

The protein belongs to the G-protein coupled receptor 2 family. Phosphorylated on Ser and Thr residues at the cytoplasmic C-terminus by G protein-coupled receptor kinases (GRKs).

Its subcellular location is the cell membrane. It localises to the basolateral cell membrane. In terms of biological role, g protein-coupled receptor activated by secretin (SCT), which is involved in different processes such as regulation of the pH of the duodenal content, food intake and water homeostasis. Ligand binding causes a conformation change that triggers signaling via guanine nucleotide-binding proteins (G proteins) and activates cAMP-dependent pathway. Upon binding to secretin, regulates the pH of the duodenum by (1) inhibiting the secretion of gastric acid from the parietal cells of the stomach and (2) stimulating the production of bicarbonate (NaHCO(3)) from the ductal cells of the pancreas. In addition to regulating the pH of the duodenal content, plays a central role in diet induced thermogenesis: acts as a non-sympathetic brown fat (BAT) activator mediating prandial thermogenesis, which consequentially induces satiation. Mechanistically, secretin released by the gut after a meal binds to secretin receptor (SCTR) in brown adipocytes, activating brown fat thermogenesis by stimulating lipolysis, which is sensed in the brain and promotes satiation. Also able to stimulate lipolysis in white adipocytes. Also plays an important role in cellular osmoregulation by regulating renal water reabsorption. Also plays a role in the central nervous system: required for synaptic plasticity. The polypeptide is Secretin receptor (SCTR) (Oryctolagus cuniculus (Rabbit)).